A 367-amino-acid polypeptide reads, in one-letter code: Putative ionic transporter y4hA (367 aa).

11 helical membrane-spanning segments follow: residues 12–32 (VPLW…MTLA), 39–59 (SVVL…ASVH), 74–94 (AILL…SLML), 108–128 (VFAA…VLGG), 143–163 (AALA…NFVT), 172–192 (AIQL…FLFV), 221–241 (LAAG…AMLL), 249–269 (VEAL…VVLL), 291–311 (VLGS…AISV), 318–338 (ALGL…VGTI), and 347–367 (VLQG…SAIP).

The protein belongs to the Ca(2+):cation antiporter (CaCA) (TC 2.A.19) family.

The protein resides in the cell membrane. Functionally, possible cation transporter. This is Putative ionic transporter y4hA from Sinorhizobium fredii (strain NBRC 101917 / NGR234).